The chain runs to 55 residues: Cicadin (55 aa).

Positions 1–26 are enriched in basic and acidic residues; it reads NEYHGFVDKANNENKRKKQQGRDDFV. Residues 1-39 are disordered; sequence NEYHGFVDKANNENKRKKQQGRDDFVVKPNNFANRRRKD.

Functionally, possesses antifungal activity against B.cinerea, M.arachidicola, F.oxysporum, R.solani and C.comatus. Suppresses the activity of HIV-1 reverse transcriptase and stimulates the proliferation of murine splenocytes. The protein is Cicadin of Cicada flammata.